Reading from the N-terminus, the 71-residue chain is ATP synthase subunit c (71 aa).

A run of 2 helical transmembrane segments spans residues 5–25 and 47–67; these read GAAI…AIIV and FIGV…GFLI.

This sequence belongs to the ATPase C chain family. As to quaternary structure, F-type ATPases have 2 components, F(1) - the catalytic core - and F(0) - the membrane proton channel. F(1) has five subunits: alpha(3), beta(3), gamma(1), delta(1), epsilon(1). F(0) has three main subunits: a(1), b(2) and c(10-14). The alpha and beta chains form an alternating ring which encloses part of the gamma chain. F(1) is attached to F(0) by a central stalk formed by the gamma and epsilon chains, while a peripheral stalk is formed by the delta and b chains.

The protein resides in the cell membrane. Functionally, f(1)F(0) ATP synthase produces ATP from ADP in the presence of a proton or sodium gradient. F-type ATPases consist of two structural domains, F(1) containing the extramembraneous catalytic core and F(0) containing the membrane proton channel, linked together by a central stalk and a peripheral stalk. During catalysis, ATP synthesis in the catalytic domain of F(1) is coupled via a rotary mechanism of the central stalk subunits to proton translocation. In terms of biological role, key component of the F(0) channel; it plays a direct role in translocation across the membrane. A homomeric c-ring of between 10-14 subunits forms the central stalk rotor element with the F(1) delta and epsilon subunits. This Alkalihalobacillus alcalophilus (Bacillus alcalophilus) protein is ATP synthase subunit c.